Here is a 996-residue protein sequence, read N- to C-terminus: Phototropin-1 (996 aa).

Positions 1-184 (MEPTEKPSTK…PGGRSGIPRV (184 aa)) are disordered. Serine 23 and serine 58 each carry phosphoserine. The segment covering 49–59 (QNLSDPRGTSP) has biased composition (polar residues). The span at 60–70 (QPRPQQEPAPS) shows a compositional bias: pro residues. The span at 141 to 153 (SGGTENDPNGKKT) shows a compositional bias: polar residues. Residues 155 to 166 (SQRNSQNSCRSS) show a composition bias toward low complexity. Positions 184-257 (VSEDLKDALS…AKIRETLAAG (74 aa)) constitute a PAS 1 domain. At serine 185 the chain carries Phosphoserine. Position 233 (asparagine 233) interacts with FMN. Cysteine 234 carries the S-4a-FMN cysteine modification. FMN is bound by residues arginine 235, glutamine 238, arginine 251, asparagine 266, asparagine 276, glutamine 297, and lysine 302. The PAC 1 domain occupies 258–312 (NNYCGRILNYKKDGTSFWNLLTIAPIKDESGKVLKFIGMQVEVSKHTEGAKEKAL). A phosphoserine mark is found at serine 350, serine 376, and serine 410. 2 disordered regions span residues 351-413 (ESTN…SLSF) and 434-453 (YGEEDDEISDRDERPESVDD). The segment covering 434 to 443 (YGEEDDEISD) has biased composition (acidic residues). Over residues 444–453 (RDERPESVDD) the composition is skewed to basic and acidic residues. A Phosphoserine modification is found at serine 450. One can recognise a PAS 2 domain in the interval 462 to 535 (KGIDLATTLE…KKIRNAIDNQ (74 aa)). Residue asparagine 511 coordinates FMN. The residue at position 512 (cysteine 512) is an S-4a-FMN cysteine. The FMN site is built by arginine 513, glutamine 516, arginine 529, asparagine 544, asparagine 554, phenylalanine 556, and glutamine 575. One can recognise a PAC 2 domain in the interval 536–590 (TEVTVQLINYTKSGKKFWNIFHLQPMRDQKGEVQYFIGVQLDGSKHVEPVRNVIE). The Protein kinase domain maps to 663-952 (FKPVKPLGSG…ANEVKQHSFF (290 aa)). ATP is bound by residues 669-677 (LGSGDTGSV) and lysine 692. Aspartate 788 serves as the catalytic Proton acceptor. The tract at residues 806–862 (DFDLSCLTSCKPQLLIPSIDEKKKKKQQKSQQTPIFMAEPMRASNSFVGTEEYIAPE) is activation loop.

This sequence belongs to the protein kinase superfamily. AGC Ser/Thr protein kinase family. As to quaternary structure, homodimer; disulfide-linked. Interacts with PKS1, PKS2, RPT2, RPT3, PHOT2 and BLUS1. Subunit of a complex made of CAR6, PHOT1 and RPT3/NPH3. Associates with CBC1 and CBC2. Binds to BHP. FMN serves as cofactor. Autophosphorylated at Ser-185, Ser-350 and Ser-410 in response to blue light irradiation. Post-translationally, 2 molecules of FMN bind covalently to cysteines after exposure to blue light and are reversed in the dark. Present in guard cells (at protein level).

It is found in the cell membrane. The protein localises to the cytoplasm. It catalyses the reaction L-seryl-[protein] + ATP = O-phospho-L-seryl-[protein] + ADP + H(+). The catalysed reaction is L-threonyl-[protein] + ATP = O-phospho-L-threonyl-[protein] + ADP + H(+). Autophosphorylation is inhibited by staurosporine, but not by tyrphostin 9, sphingosine, GW5074 and BML-265. Functionally, protein kinase that acts as a blue light (BL) photoreceptor in a signal-transduction pathway for photo-induced movements. Triggers the phosphorylation of AHA1 and AHA2 C-terminal penultimate Thr in guard cells to activate them and induce stomatal opening in response to blue light (BL). Also phosphorylates BLUS1, a kinase involved in stomatal opening. Mediates the phosphorylation of CBC1 in stomata, but not of CBC2, in response to blue light. Required for blue light mediated mRNA destabilization. Mediates calcium spiking of extracellular origin in response to a low rate of blue light. Also mediates rapid membrane depolarization and growth inhibition in response to blue light. Necessary for root phototropism. Involved in hypocotyl phototropism under a low rate but not under a high rate of blue light. Contributes to the chloroplast accumulation but seems not to be required for chloroplast translocation. Regulates stomata opening and photomorphogenesis response of leaf tissue. Confers sensitivity to drought. Not involved in hypocotyl elongation inhibition, anthocyanin accumulation or cotyledon opening. Involved in the regulation of leaf position and morphology via the phosphorylation of ABCB19 during blue light responses to modulate auxin distribution. The sequence is that of Phototropin-1 from Arabidopsis thaliana (Mouse-ear cress).